A 464-amino-acid polypeptide reads, in one-letter code: Trigger factor (464 aa).

One can recognise a PPIase FKBP-type domain in the interval 162 to 243 (GDFVSIDLSA…VKSVKERELP (82 aa)). The disordered stretch occupies residues 431–464 (IDTSEFFGKRPSGDGAADEDADQADESTTADAGE). Residues 446 to 455 (AADEDADQAD) show a composition bias toward acidic residues.

The protein belongs to the FKBP-type PPIase family. Tig subfamily.

The protein localises to the cytoplasm. The enzyme catalyses [protein]-peptidylproline (omega=180) = [protein]-peptidylproline (omega=0). In terms of biological role, involved in protein export. Acts as a chaperone by maintaining the newly synthesized protein in an open conformation. Functions as a peptidyl-prolyl cis-trans isomerase. This Mycobacterium avium (strain 104) protein is Trigger factor.